The sequence spans 241 residues: 6-phosphogluconolactonase (241 aa).

This sequence belongs to the glucosamine/galactosamine-6-phosphate isomerase family. 6-phosphogluconolactonase subfamily.

The enzyme catalyses 6-phospho-D-glucono-1,5-lactone + H2O = 6-phospho-D-gluconate + H(+). It functions in the pathway carbohydrate degradation; pentose phosphate pathway; D-ribulose 5-phosphate from D-glucose 6-phosphate (oxidative stage): step 2/3. In terms of biological role, hydrolysis of 6-phosphogluconolactone to 6-phosphogluconate. The chain is 6-phosphogluconolactonase (pgl) from Treponema pallidum (strain Nichols).